Here is a 505-residue protein sequence, read N- to C-terminus: Ribose import ATP-binding protein RbsA (505 aa).

ABC transporter domains lie at 12–249 and 259–504; these read LQMK…VGRK and VKKG…VAFS. An ATP-binding site is contributed by 44–51; it reads GENGAGKS.

This sequence belongs to the ABC transporter superfamily. Ribose importer (TC 3.A.1.2.1) family. As to quaternary structure, the complex is composed of an ATP-binding protein (RbsA), two transmembrane proteins (RbsC) and a solute-binding protein (RbsB).

It localises to the cell membrane. It carries out the reaction D-ribose(out) + ATP + H2O = D-ribose(in) + ADP + phosphate + H(+). In terms of biological role, part of the ABC transporter complex RbsABC involved in ribose import. Responsible for energy coupling to the transport system. The sequence is that of Ribose import ATP-binding protein RbsA from Clostridium tetani (strain Massachusetts / E88).